The following is a 303-amino-acid chain: Uricase (303 aa).

Residues Lys12 and Thr60 each act as charge relay system in the active site. Residues Thr60, Asp61, Phe162, Arg179, Val234, Gln235, and Asn261 each contribute to the urate site. Catalysis depends on His263, which acts as the Charge relay system. The Microbody targeting signal motif lies at 301 to 303 (TKL).

This sequence belongs to the uricase family.

It is found in the peroxisome. The catalysed reaction is urate + O2 + H2O = 5-hydroxyisourate + H2O2. Its pathway is purine metabolism; urate degradation; (S)-allantoin from urate: step 1/3. Functionally, catalyzes the oxidation of uric acid to 5-hydroxyisourate, which is further processed to form (S)-allantoin. This chain is Uricase, found in Cyberlindnera jadinii (Torula yeast).